The sequence spans 222 residues: MPKTMHFLFRFIVFFYLWGLFTAQRQKKEESTEEVKIEVLHRPENCSKTSKKGDLLNAHYDGYLAKDGSKFYCSRTQNEGHPKWFVLGVGQVIKGLDIAMTDMCPGEKRKVVIPPSFAYGKEGYAEGKIPPDATLIFEIELYAVTKGPRSIETFKQIDMDNDRQLSKAEINLYLQREFEKDEKPRDKSYQDAVLEDIFKKNDHDGDGFISPKEYNVYQHDEL.

An N-terminal signal peptide occupies residues 1-23 (MPKTMHFLFRFIVFFYLWGLFTA). Asn-45 is a glycosylation site (N-linked (GlcNAc...) asparagine). One can recognise a PPIase FKBP-type domain in the interval 53–145 (GDLLNAHYDG…IFEIELYAVT (93 aa)). 2 EF-hand domains span residues 145–180 (TKGP…EFEK) and 189–222 (YQDA…HDEL). Ca(2+) contacts are provided by Asp-158, Asp-160, Asp-162, Gln-164, Glu-169, Asp-202, Asp-204, Asp-206, and Glu-213. The disordered stretch occupies residues 200 to 222 (KNDHDGDGFISPKEYNVYQHDEL). The short motif at 219–222 (HDEL) is the Retention in the endoplasmic reticulum element.

Post-translationally, glycosylated.

Its subcellular location is the endoplasmic reticulum lumen. It catalyses the reaction [protein]-peptidylproline (omega=180) = [protein]-peptidylproline (omega=0). Its function is as follows. PPIases accelerate the folding of proteins during protein synthesis. This is Peptidyl-prolyl cis-trans isomerase FKBP7 (FKBP7) from Homo sapiens (Human).